A 304-amino-acid chain; its full sequence is Homoserine kinase (304 aa).

90-100 (PLARGLGSSAS) contacts ATP.

Belongs to the GHMP kinase family. Homoserine kinase subfamily.

It localises to the cytoplasm. The catalysed reaction is L-homoserine + ATP = O-phospho-L-homoserine + ADP + H(+). Its pathway is amino-acid biosynthesis; L-threonine biosynthesis; L-threonine from L-aspartate: step 4/5. In terms of biological role, catalyzes the ATP-dependent phosphorylation of L-homoserine to L-homoserine phosphate. The chain is Homoserine kinase from Staphylococcus aureus (strain MRSA252).